The chain runs to 276 residues: Large ribosomal subunit protein uL2 (276 aa).

The tract at residues 223–276 is disordered; the sequence is GAAMNPVDHPHGGGEGRAPRGRPPASPWGWQTKGLKTRKRRKPSSRFIIARRKK. Over residues 230–240 the composition is skewed to basic and acidic residues; the sequence is DHPHGGGEGRA. Positions 257-276 are enriched in basic residues; that stretch reads LKTRKRRKPSSRFIIARRKK.

Belongs to the universal ribosomal protein uL2 family. As to quaternary structure, part of the 50S ribosomal subunit. Forms a bridge to the 30S subunit in the 70S ribosome.

In terms of biological role, one of the primary rRNA binding proteins. Required for association of the 30S and 50S subunits to form the 70S ribosome, for tRNA binding and peptide bond formation. It has been suggested to have peptidyltransferase activity; this is somewhat controversial. Makes several contacts with the 16S rRNA in the 70S ribosome. This is Large ribosomal subunit protein uL2 from Thermus thermophilus (strain ATCC BAA-163 / DSM 7039 / HB27).